The chain runs to 36 residues: Photosystem I reaction center subunit VIII (36 aa).

The chain crosses the membrane as a helical span at residues 9–29; sequence ILVPLVGLIFPAIAMTSLFIY.

It belongs to the PsaI family.

Its subcellular location is the plastid. The protein resides in the chloroplast thylakoid membrane. In terms of biological role, may help in the organization of the PsaL subunit. This chain is Photosystem I reaction center subunit VIII, found in Tupiella akineta (Green alga).